Consider the following 248-residue polypeptide: ATP synthase subunit a, chloroplastic (248 aa).

5 helical membrane passes run 38–58 (QVLLTSWFVLAVLLGLAVLTV), 96–116 (VPFIGTLFLFIFVSNWSGALV), 135–155 (INTTVALALLTSVAYFYAGLA), 200–220 (LVVAVLVSLVPLVVPIPVMLL), and 221–241 (GLFTSGIQALIFATLAAAYIG).

It belongs to the ATPase A chain family. In terms of assembly, F-type ATPases have 2 components, CF(1) - the catalytic core - and CF(0) - the membrane proton channel. CF(1) has five subunits: alpha(3), beta(3), gamma(1), delta(1), epsilon(1). CF(0) has four main subunits: a, b, b' and c.

It is found in the plastid. Its subcellular location is the chloroplast thylakoid membrane. Its function is as follows. Key component of the proton channel; it plays a direct role in the translocation of protons across the membrane. The chain is ATP synthase subunit a, chloroplastic from Welwitschia mirabilis (Tree tumbo).